Here is a 90-residue protein sequence, read N- to C-terminus: MKPMRQKPGRGQGNKSISNALASKKKVSKNQAVFFDYRDERKLKRFINDQGKMIPRRITGLSAKEQNLLTHSVKWARFLAVIPYVSDEYK.

The disordered stretch occupies residues 1-24 (MKPMRQKPGRGQGNKSISNALASK).

Belongs to the bacterial ribosomal protein bS18 family. In terms of assembly, part of the 30S ribosomal subunit. Forms a tight heterodimer with protein bS6.

Functionally, binds as a heterodimer with protein bS6 to the central domain of the 16S rRNA, where it helps stabilize the platform of the 30S subunit. This chain is Small ribosomal subunit protein bS18, found in Chlorobium phaeovibrioides (strain DSM 265 / 1930) (Prosthecochloris vibrioformis (strain DSM 265)).